Here is a 209-residue protein sequence, read N- to C-terminus: Imidazole glycerol phosphate synthase subunit HisH (209 aa).

A Glutamine amidotransferase type-1 domain is found at M1–S205. Residue C79 is the Nucleophile of the active site. Active-site residues include H180 and E182.

Heterodimer of HisH and HisF.

It localises to the cytoplasm. It catalyses the reaction 5-[(5-phospho-1-deoxy-D-ribulos-1-ylimino)methylamino]-1-(5-phospho-beta-D-ribosyl)imidazole-4-carboxamide + L-glutamine = D-erythro-1-(imidazol-4-yl)glycerol 3-phosphate + 5-amino-1-(5-phospho-beta-D-ribosyl)imidazole-4-carboxamide + L-glutamate + H(+). The enzyme catalyses L-glutamine + H2O = L-glutamate + NH4(+). It participates in amino-acid biosynthesis; L-histidine biosynthesis; L-histidine from 5-phospho-alpha-D-ribose 1-diphosphate: step 5/9. Its function is as follows. IGPS catalyzes the conversion of PRFAR and glutamine to IGP, AICAR and glutamate. The HisH subunit catalyzes the hydrolysis of glutamine to glutamate and ammonia as part of the synthesis of IGP and AICAR. The resulting ammonia molecule is channeled to the active site of HisF. This is Imidazole glycerol phosphate synthase subunit HisH from Bacillus cereus (strain G9842).